A 341-amino-acid chain; its full sequence is Large ribosomal subunit protein uL10 (341 aa).

The interval 301-341 is disordered; it reads EAAPAAAPAAEEKAEEEKKEEEEEKKEDQELSGLDSIFGGF.

This sequence belongs to the universal ribosomal protein uL10 family. As to quaternary structure, part of the 50S ribosomal subunit. Forms part of the ribosomal stalk which helps the ribosome interact with GTP-bound translation factors. Forms a heptameric L10(L12)2(L12)2(L12)2 complex, where L10 forms an elongated spine to which the L12 dimers bind in a sequential fashion.

Functionally, forms part of the ribosomal stalk, playing a central role in the interaction of the ribosome with GTP-bound translation factors. The polypeptide is Large ribosomal subunit protein uL10 (Aeropyrum pernix (strain ATCC 700893 / DSM 11879 / JCM 9820 / NBRC 100138 / K1)).